A 280-amino-acid polypeptide reads, in one-letter code: Elongation factor Ts (280 aa).

The involved in Mg(2+) ion dislocation from EF-Tu stretch occupies residues 82 to 85; it reads TDFV.

This sequence belongs to the EF-Ts family.

It localises to the cytoplasm. In terms of biological role, associates with the EF-Tu.GDP complex and induces the exchange of GDP to GTP. It remains bound to the aminoacyl-tRNA.EF-Tu.GTP complex up to the GTP hydrolysis stage on the ribosome. This is Elongation factor Ts from Baumannia cicadellinicola subsp. Homalodisca coagulata.